A 385-amino-acid chain; its full sequence is Succinate--CoA ligase [ADP-forming] subunit beta (385 aa).

The ATP-grasp domain maps to 9–244 (KEILRKYGVP…QDEEDPLETR (236 aa)). Residues Lys-46, 53–55 (GRG), Glu-99, Cys-102, and Glu-107 each bind ATP. Mg(2+) is bound by residues Asn-199 and Asp-213. Residues Asn-264 and 321 to 323 (GIM) each bind substrate.

Belongs to the succinate/malate CoA ligase beta subunit family. As to quaternary structure, heterotetramer of two alpha and two beta subunits. Mg(2+) serves as cofactor.

The enzyme catalyses succinate + ATP + CoA = succinyl-CoA + ADP + phosphate. The catalysed reaction is GTP + succinate + CoA = succinyl-CoA + GDP + phosphate. It participates in carbohydrate metabolism; tricarboxylic acid cycle; succinate from succinyl-CoA (ligase route): step 1/1. Its function is as follows. Succinyl-CoA synthetase functions in the citric acid cycle (TCA), coupling the hydrolysis of succinyl-CoA to the synthesis of either ATP or GTP and thus represents the only step of substrate-level phosphorylation in the TCA. The beta subunit provides nucleotide specificity of the enzyme and binds the substrate succinate, while the binding sites for coenzyme A and phosphate are found in the alpha subunit. This Rickettsia bellii (strain OSU 85-389) protein is Succinate--CoA ligase [ADP-forming] subunit beta.